We begin with the raw amino-acid sequence, 347 residues long: Pre-B-cell leukemia transcription factor 1 (347 aa).

Residues Met1 to Lys40 are disordered. Positions Gly38 to Asp232 constitute a PBC domain. Positions Asp45–Gly124 are PBC-A. The PBC-B stretch occupies residues Ala127 to Asp232. Positions Ala233–Ile295 form a DNA-binding region, homeobox; TALE-type. Over residues Val318 to Ser331 the composition is skewed to polar residues. The disordered stretch occupies residues Val318–Gln347.

The protein belongs to the TALE/PBX homeobox family. Forms a heterodimer with meis1; the interaction is necessary for neural fate induction.

It localises to the nucleus. Its function is as follows. Acts as a transcriptional activator in complex with isoform 2 of meis1, to induce posterior neural and neural crest gene expression, and thereby specify hindbrain and neural crest cell fate. Binds to a highly conserved region in the promoter of the neural crest gene zic3. Required for the nuclear transport or retention of meis1. The polypeptide is Pre-B-cell leukemia transcription factor 1 (Xenopus tropicalis (Western clawed frog)).